Consider the following 250-residue polypeptide: 2,3-bisphosphoglycerate-dependent phosphoglycerate mutase (250 aa).

Substrate is bound by residues 8–15, 21–22, Arg-60, 87–90, Lys-98, 114–115, and 183–184; these read RHGQSAWN, TG, ERHY, RR, and GN. His-9 acts as the Tele-phosphohistidine intermediate in catalysis. Catalysis depends on Glu-87, which acts as the Proton donor/acceptor.

The protein belongs to the phosphoglycerate mutase family. BPG-dependent PGAM subfamily. As to quaternary structure, homodimer.

It catalyses the reaction (2R)-2-phosphoglycerate = (2R)-3-phosphoglycerate. The protein operates within carbohydrate degradation; glycolysis; pyruvate from D-glyceraldehyde 3-phosphate: step 3/5. Catalyzes the interconversion of 2-phosphoglycerate and 3-phosphoglycerate. In Nitratidesulfovibrio vulgaris (strain DP4) (Desulfovibrio vulgaris), this protein is 2,3-bisphosphoglycerate-dependent phosphoglycerate mutase.